A 523-amino-acid polypeptide reads, in one-letter code: DNA primase (523 aa).

The CHC2-type zinc-finger motif lies at 37–61; that stretch reads CPFHAEKTPSFFVNPLQGYFYCFGC. A Toprim domain is found at 259 to 340; it reads KSVILVEGYI…NVSVVRMDFG (82 aa). Residues E265, D309, and D311 each coordinate Mg(2+).

Belongs to the DnaG primase family. As to quaternary structure, monomer. Interacts with DnaB. The cofactor is Zn(2+). Mg(2+) serves as cofactor.

It carries out the reaction ssDNA + n NTP = ssDNA/pppN(pN)n-1 hybrid + (n-1) diphosphate.. In terms of biological role, RNA polymerase that catalyzes the synthesis of short RNA molecules used as primers for DNA polymerase during DNA replication. The sequence is that of DNA primase from Borreliella burgdorferi (strain ATCC 35210 / DSM 4680 / CIP 102532 / B31) (Borrelia burgdorferi).